Consider the following 583-residue polypeptide: Selenocysteine-specific elongation factor (583 aa).

The tr-type G domain maps to 5-203; sequence RVNVNVGVLG…LLKSQISIPT (199 aa). The interval 14–21 is G1; the sequence is GHIDSGKT. GTP is bound by residues glycine 19, threonine 21, and alanine 22. Threonine 21 contacts Mg(2+). The tract at residues 46-50 is G2; that stretch reads GITLD. Mg(2+) contacts are provided by threonine 48 and aspartate 78. The interval 78 to 81 is G3; it reads DCPG. Positions 132-135 are G4; that stretch reads NKID. GTP is bound by residues aspartate 135 and lysine 173. Positions 171–173 are G5; it reads AAK. Positions 371–390 are disordered; sequence MPTATEGDDEADPKAGHAPG. Serine 524 is subject to Phosphoserine. The tract at residues 528–562 is disordered; sequence KKILTPTLKKRSRAGRGETTKPEEGTERPEPIQPV. Position 532 is a phosphothreonine (threonine 532). Positions 534–540 match the Nuclear localization signal motif; the sequence is TLKKRSR. Residues 542–557 are compositionally biased toward basic and acidic residues; that stretch reads GRGETTKPEEGTERPE. Residue arginine 543 is modified to Omega-N-methylarginine.

The protein belongs to the TRAFAC class translation factor GTPase superfamily. Classic translation factor GTPase family. SelB subfamily. Mg(2+) is required as a cofactor. Mn(2+) serves as cofactor.

Its subcellular location is the cytoplasm. The protein localises to the nucleus. It catalyses the reaction GTP + H2O = GDP + phosphate + H(+). Functionally, translation factor required for the incorporation of the rare amino acid selenocysteine encoded by UGA codons. Replaces the eRF1-eRF3-GTP ternary complex for the insertion of selenocysteine directed by the UGA codon. Insertion of selenocysteine at UGA codons is mediated by SECISBP2 and EEFSEC: SECISBP2 (1) specifically binds the SECIS sequence once the 80S ribosome encounters an in-frame UGA codon and (2) contacts the RPS27A/eS31 of the 40S ribosome before ribosome stalling. (3) GTP-bound EEFSEC then delivers selenocysteinyl-tRNA(Sec) to the 80S ribosome and adopts a preaccommodated state conformation. (4) After GTP hydrolysis, EEFSEC dissociates from the assembly, selenocysteinyl-tRNA(Sec) accommodates, and peptide bond synthesis and selenoprotein elongation occur. The chain is Selenocysteine-specific elongation factor (Eefsec) from Mus musculus (Mouse).